The following is a 786-amino-acid chain: DENN domain-containing protein 1C (786 aa).

Positions 13 to 158 (FDWFFEAGCP…MDSSITVRSE (146 aa)) constitute a uDENN domain. A cDENN domain is found at 182–318 (SLPSIPENRN…VVSLLRLRLR (137 aa)). The dDENN domain maps to 320–398 (VALSPGEGVS…ESRLEKLNAG (79 aa)). The FXDXF motif motif lies at 401-405 (FSDQF). The segment at 481 to 553 (KDGDSGLQRG…LSPGDTQNPW (73 aa)) is disordered. A compositionally biased stretch (basic and acidic residues) spans 527–541 (LKTEEGPSEPLRERS). The span at 542 to 552 (PTLSPGDTQNP) shows a compositional bias: polar residues. S565 is modified (phosphoserine). The short motif at 570-579 (DLLSEILDSL) is the Clathrin box element. Disordered regions lie at residues 653-741 (YSKN…QPPQ) and 762-786 (SHVS…CFEN). The span at 657–675 (SCSQPFQQSPPSQGDPGPS) shows a compositional bias: low complexity. The span at 706-740 (LLVSTEPNSDAVQRLQSISSPSCSHSAENPRNQPP) shows a compositional bias: polar residues. Basic and acidic residues predominate over residues 770–786 (PQDKQPRVADLKKCFEN).

Exhibits low nucleotide-independent RAB35-binding activity. Interacts with clathrin heavy chain/CLTC and with AP2A2, but not with AP2B1.

Its subcellular location is the cytoplasm. The protein localises to the cytosol. The protein resides in the cytoplasmic vesicle. It localises to the clathrin-coated vesicle. In terms of biological role, guanine nucleotide exchange factor (GEF) which may activate RAB8A, RAB13 and RAB35. Promotes the exchange of GDP to GTP, converting inactive GDP-bound Rab proteins into their active GTP-bound form. The sequence is that of DENN domain-containing protein 1C (Dennd1c) from Mus musculus (Mouse).